A 527-amino-acid polypeptide reads, in one-letter code: Peptide chain release factor 3 (527 aa).

The 269-residue stretch at 10 to 278 (DRRRTFAIIS…TFVENAPAPL (269 aa)) folds into the tr-type G domain. GTP-binding positions include 19–26 (SHPDAGKT), 87–91 (DTPGH), and 141–144 (NKLD).

It belongs to the TRAFAC class translation factor GTPase superfamily. Classic translation factor GTPase family. PrfC subfamily.

The protein localises to the cytoplasm. Its function is as follows. Increases the formation of ribosomal termination complexes and stimulates activities of RF-1 and RF-2. It binds guanine nucleotides and has strong preference for UGA stop codons. It may interact directly with the ribosome. The stimulation of RF-1 and RF-2 is significantly reduced by GTP and GDP, but not by GMP. This chain is Peptide chain release factor 3, found in Geobacter metallireducens (strain ATCC 53774 / DSM 7210 / GS-15).